The sequence spans 66 residues: Small ribosomal subunit protein eS27 (66 aa).

C21, C24, C40, and C43 together coordinate Zn(2+). The C4-type zinc-finger motif lies at 21–43; it reads CPVCGNEQVIFSHATFPARCLVC.

Belongs to the eukaryotic ribosomal protein eS27 family. In terms of assembly, part of the 30S ribosomal subunit. Zn(2+) serves as cofactor.

The sequence is that of Small ribosomal subunit protein eS27 from Hyperthermus butylicus (strain DSM 5456 / JCM 9403 / PLM1-5).